The chain runs to 130 residues: Small ribosomal subunit protein uS9 (130 aa).

Positions 101–110 (AGFLTRDPRM) are enriched in basic and acidic residues. Positions 101 to 130 (AGFLTRDPRMKERKKYGLKKARRAPQFSKR) are disordered. Residues 111–130 (KERKKYGLKKARRAPQFSKR) are compositionally biased toward basic residues.

This sequence belongs to the universal ribosomal protein uS9 family.

The sequence is that of Small ribosomal subunit protein uS9 from Clostridium tetani (strain Massachusetts / E88).